The sequence spans 329 residues: DNA-directed RNA polymerase subunit alpha (329 aa).

The segment at 1-235 is alpha N-terminal domain (alpha-NTD); sequence MQGSVTEFLK…EQLEAFVDLR (235 aa). The interval 249-329 is alpha C-terminal domain (alpha-CTD); it reads FDPILLRPVD…NWPPASIADE (81 aa).

It belongs to the RNA polymerase alpha chain family. In terms of assembly, homodimer. The RNAP catalytic core consists of 2 alpha, 1 beta, 1 beta' and 1 omega subunit. When a sigma factor is associated with the core the holoenzyme is formed, which can initiate transcription.

The enzyme catalyses RNA(n) + a ribonucleoside 5'-triphosphate = RNA(n+1) + diphosphate. Functionally, DNA-dependent RNA polymerase catalyzes the transcription of DNA into RNA using the four ribonucleoside triphosphates as substrates. The sequence is that of DNA-directed RNA polymerase subunit alpha from Shigella dysenteriae serotype 1 (strain Sd197).